The sequence spans 307 residues: Ribonuclease Z (307 aa).

Zn(2+) is bound by residues His-61, His-63, Asp-65, His-66, His-138, Asp-208, and His-264. Residue Asp-65 is the Proton acceptor of the active site.

It belongs to the RNase Z family. As to quaternary structure, homodimer. It depends on Zn(2+) as a cofactor.

It catalyses the reaction Endonucleolytic cleavage of RNA, removing extra 3' nucleotides from tRNA precursor, generating 3' termini of tRNAs. A 3'-hydroxy group is left at the tRNA terminus and a 5'-phosphoryl group is left at the trailer molecule.. Its function is as follows. Zinc phosphodiesterase, which displays some tRNA 3'-processing endonuclease activity. Probably involved in tRNA maturation, by removing a 3'-trailer from precursor tRNA. Also shows activity toward a broad range of substrates, such as intron containing pre-tRNAs, 5' extended precursors and non-RNA substrates. This Pyrococcus furiosus (strain ATCC 43587 / DSM 3638 / JCM 8422 / Vc1) protein is Ribonuclease Z.